The sequence spans 415 residues: MSRTRTTPGRRVESDVVDIGEHEFESGEILPDLKVAYEAYGEFDGQNAVLVCHGLTGSQHVAGHGTESGVSGQARAWWGDIVGPGKALDTNDYYVICVNVPGSCYGTSGPASEGPDGEPWGTDFPPVTVHDWTRAQRRLLDHLGVGRLHAVVGGSVGGMNALDWAVQFPDDVERLAVVASAARLDSQCLGIDAVARRAITSDPNWNGGDYYGEDRATPDAGLGLARQLGHLMYLSKDSMERKFGRRSAGRGDRGDAFPSDPAAAFFPYREVESYLDYQAEKFAERFDANSYLYLTRAMDDFDLSEGYESDAAALAAFEGESLLVSFTGDWHFTTEQSESLAGAFRRVDVPVAHHVVESDHGHDAFLVEPEKVGPPLGDFVDEGVAGRAVTDTATDGGEPDEEEDFAPVHSSLFSR.

Positions 47–369 (NAVLVCHGLT…HGHDAFLVEP (323 aa)) constitute an AB hydrolase-1 domain. Ser-155 (nucleophile) is an active-site residue. Position 226 (Arg-226) interacts with substrate. Residues Asp-329 and His-362 contribute to the active site. Asp-363 is a substrate binding site. Positions 387 to 415 (RAVTDTATDGGEPDEEEDFAPVHSSLFSR) are disordered.

This sequence belongs to the AB hydrolase superfamily. MetX family. In terms of assembly, homodimer.

The protein localises to the cytoplasm. It catalyses the reaction L-homoserine + acetyl-CoA = O-acetyl-L-homoserine + CoA. It functions in the pathway amino-acid biosynthesis; L-methionine biosynthesis via de novo pathway; O-acetyl-L-homoserine from L-homoserine: step 1/1. In terms of biological role, transfers an acetyl group from acetyl-CoA to L-homoserine, forming acetyl-L-homoserine. In Haloferax prahovense (strain DSM 18310 / JCM 13924 / TL6), this protein is Homoserine O-acetyltransferase.